A 67-amino-acid polypeptide reads, in one-letter code: Bombesin (67 aa).

The signal sequence occupies residues methionine 1 to valine 30. Positions aspartate 31–alanine 49 are excised as a propeptide. Pyrrolidone carboxylic acid is present on glutamine 50. Methionine 64 carries the methionine amide modification.

It belongs to the bombesin/neuromedin-B/ranatensin family. As to expression, expressed by the skin dorsal glands.

It localises to the secreted. Functionally, stimulates smooth muscle contraction in isolated rat stomach strip. The chain is Bombesin from Sanguirana varians (Palawan frog).